A 477-amino-acid polypeptide reads, in one-letter code: RNA pseudouridine synthase 4, mitochondrial (477 aa).

A mitochondrion-targeting transit peptide spans 1–43 (MAKWRLATATLRRQLQSSSPTISTFKNPTKALSAAAHQSTRSY). Residues 34–55 (AAAHQSTRSYSTTQTDDSRGKW) form a disordered region. A compositionally biased stretch (polar residues) spans 36–48 (AHQSTRSYSTTQT). The region spanning 90–175 (TTALRWILRC…AKKESFQCSD (86 aa)) is the S4 RNA-binding domain. Aspartate 236 is an active-site residue.

This sequence belongs to the pseudouridine synthase RluA family.

The protein localises to the mitochondrion. The enzyme catalyses a uridine in RNA = a pseudouridine in RNA. This is RNA pseudouridine synthase 4, mitochondrial from Arabidopsis thaliana (Mouse-ear cress).